The following is a 161-amino-acid chain: Allophycocyanin beta chain (161 aa).

Asparagine 71 carries the N4-methylasparagine modification. Cysteine 81 provides a ligand contact to (2R,3E)-phycocyanobilin.

This sequence belongs to the phycobiliprotein family. In terms of assembly, heterodimer of an alpha and a beta chain. Contains one covalently linked phycocyanobilin chromophore.

Its subcellular location is the cellular thylakoid membrane. Functionally, light-harvesting photosynthetic bile pigment-protein from the phycobiliprotein complex. Allophycocyanin has a maximum absorption at approximately 650 nanometers. The sequence is that of Allophycocyanin beta chain (apcB) from Anabaena cylindrica.